Consider the following 234-residue polypeptide: Purine nucleoside phosphorylase DeoD-type (234 aa).

Residue His-5 participates in a purine D-ribonucleoside binding. Phosphate contacts are provided by residues Gly-21, Arg-25, Arg-44, and 88-91; that span reads RVGT. Residues 178–180 and 202–203 each bind a purine D-ribonucleoside; these read EME and SD. The active-site Proton donor is the Asp-203.

The protein belongs to the PNP/UDP phosphorylase family. Homohexamer; trimer of homodimers.

It carries out the reaction a purine D-ribonucleoside + phosphate = a purine nucleobase + alpha-D-ribose 1-phosphate. The enzyme catalyses a purine 2'-deoxy-D-ribonucleoside + phosphate = a purine nucleobase + 2-deoxy-alpha-D-ribose 1-phosphate. Its function is as follows. Catalyzes the reversible phosphorolytic breakdown of the N-glycosidic bond in the beta-(deoxy)ribonucleoside molecules, with the formation of the corresponding free purine bases and pentose-1-phosphate. This is Purine nucleoside phosphorylase DeoD-type from Lactococcus lactis subsp. cremoris (strain MG1363).